Here is a 295-residue protein sequence, read N- to C-terminus: Trimeric intracellular cation channel type A (295 aa).

At 1-18 the chain is on the lumenal side; that stretch reads MEVLDVLNLGEIAQYFSK. Residues 19–37 form a helical membrane-spanning segment; it reads MAMFPVFDVAYYIVSILYL. At 38 to 51 the chain is on the cytoplasmic side; sequence KYEPGAVEVSRRSP. A helical membrane pass occupies residues 52 to 75; it reads VASWLCAMLYCFGSYILADIMLGV. Glycine 74 contacts Ca(2+). The Lumenal segment spans residues 76–86; sequence CPIDYFHNNSH. Residues 87 to 106 traverse the membrane as a helical segment; that stretch reads ILLASAVWYLIFFCPLNLFY. Residues 107–144 lie on the Cytoplasmic side of the membrane; sequence KCVAFMPVKLVLVALKEVVRTRKIAAGVHHAHHAYHHG. The a 1,2-diacyl-sn-glycero-3-phospho-(1D-myo-inositol-4,5-bisphosphate) site is built by lysine 122 and arginine 126. A helical transmembrane segment spans residues 145–162; it reads WLIMVITGYVKGSGVALM. At 163–182 the chain is on the lumenal side; that stretch reads SNFEQLLRGVWKPETNEVLN. A helical membrane pass occupies residues 183–199; that stretch reads MSFPTKASLYGAILFTL. Over 200 to 210 the chain is Cytoplasmic; sequence QEAHVLPVSKS. Residues 211–227 traverse the membrane as a helical segment; that stretch reads TLICLFTLFMVSSKVFM. Over 228–236 the chain is Lumenal; the sequence is TARHSHGSP. The helical transmembrane segment at 237–255 threads the bilayer; sequence FALIESWVCHVLFGSPLGT. Residues 256-295 are Cytoplasmic-facing; it reads EDAHDHHHAAPAAAPAPLSPAKNKEELSEGTRKRKSKKAE. The interval 259–295 is disordered; it reads HDHHHAAPAAAPAPLSPAKNKEELSEGTRKRKSKKAE. Over residues 265 to 276 the composition is skewed to low complexity; the sequence is APAAAPAPLSPA. Basic and acidic residues predominate over residues 277-286; it reads KNKEELSEGT.

Belongs to the TMEM38 family. As to quaternary structure, homotrimer; conformation seems to be controled by binding to diacylglycerol (DAG).

Its subcellular location is the sarcoplasmic reticulum membrane. It is found in the nucleus membrane. It carries out the reaction K(+)(in) = K(+)(out). Channel activity is activated by a change of voltage within the sarcoplasmic reticulum lumen and blocked by luminal high Ca(2+) levels. Its function is as follows. Intracellular monovalent cation channel required for maintenance of rapid intracellular calcium release. Acts as a potassium counter-ion channel that functions in synchronization with calcium release from intracellular stores. Opened by a change of voltage within the sarcoplasmic reticulum lumen. The protein is Trimeric intracellular cation channel type A (tmem38a) of Danio rerio (Zebrafish).